A 356-amino-acid chain; its full sequence is Tyrosine recombinase XerS (356 aa).

The 106-residue stretch at 16-121 (IMPSYVLEYY…ALSSLYKYLT (106 aa)) folds into the Core-binding (CB) domain. The Tyr recombinase domain maps to 169-354 (GFLDYIDNEY…INEEQKNALD (186 aa)). Active-site residues include R210, K234, H306, R309, and H332. Catalysis depends on Y341, which acts as the O-(3'-phospho-DNA)-tyrosine intermediate.

It belongs to the 'phage' integrase family. XerS subfamily.

It localises to the cytoplasm. With respect to regulation, ftsK is required for recombination. Its function is as follows. Site-specific tyrosine recombinase, which acts by catalyzing the cutting and rejoining of the recombining DNA molecules. Essential to convert dimers of the bacterial chromosome into monomers to permit their segregation at cell division. This chain is Tyrosine recombinase XerS, found in Lactococcus lactis subsp. lactis (strain IL1403) (Streptococcus lactis).